Reading from the N-terminus, the 486-residue chain is Secreted protein C (486 aa).

Residues 1–22 (MKINIILLFVGLILAFAVLSNA) form the signal peptide. Residues 30 to 332 (GVNPFDNNNS…SGSHGGSSSH (303 aa)) form a disordered region. The N-linked (GlcNAc...) asparagine glycan is linked to N37. A compositionally biased stretch (gly residues) spans 41–60 (SGSGSGSGGGSSSSGSGTGQ). Residues 61–318 (SSGTVSSSGS…TGSSEYSSSS (258 aa)) show a composition bias toward low complexity. 7 N-linked (GlcNAc...) asparagine glycosylation sites follow: N73, N74, N83, N112, N129, N149, and N174.

The protein belongs to the Sct family.

The protein resides in the secreted. This is Secreted protein C from Dictyostelium discoideum (Social amoeba).